Here is a 1407-residue protein sequence, read N- to C-terminus: Enhancer of mRNA-decapping protein 4 (1407 aa).

An N-acetylalanine modification is found at A2. A phosphoserine mark is found at S3 and S6. K125 is subject to N6-acetyllysine. 4 WD repeats span residues 174-214 (GFTG…GKIQ), 230-277 (NHFR…SSHS), 295-334 (GHST…QDEP), and 342-393 (PHDG…CLQT). The tract at residues 547-566 (GESRPELGSEGLASAPHGSQ) is disordered. 4 positions are modified to phosphoserine: S560, S565, S583, and S585. 2 disordered regions span residues 604–632 (SLQQ…SSSS) and 673–745 (SSSS…STAL). 2 stretches are compositionally biased toward low complexity: residues 609-632 (SASP…SSSS) and 673-693 (SSSS…LPGP). 4 positions are modified to phosphoserine: S681, S713, S728, and S730. Over residues 727–745 (ASPSRTRSPDVISSASTAL) the composition is skewed to polar residues. T732 carries the phosphothreonine modification. Phosphoserine occurs at positions 734 and 746. A disordered region spans residues 787–817 (PRPRQGPELSSQLGLDGGPGDGDRHSTPSLL). T827 is modified (phosphothreonine). A phosphoserine mark is found at S850 and S877. Positions 875 to 951 (HDSQDTSAEQ…SRLTEHQVVE (77 aa)) are disordered. T880 bears the Phosphothreonine mark. 5 positions are modified to phosphoserine: S881, S885, S893, S896, and S898. A Phosphothreonine modification is found at T907. Residues 972–1031 (HNQEELLQRLCAQLEGLQSTVTDHVERALETRHEQEQRRLERALAEGQQRGGQLQEQLTQ) are a coiled coil. Position 1386 is a phosphoserine (S1386).

Belongs to the WD repeat EDC4 family. In terms of assembly, part of a decapping complex consisting of DCP1A, DCP2, EDC3, EDC4 and probably DDX6. Part of a complex consisting of DCP1A, EDC3, EDC4 and DDX6. Part of a complex consisting of DCP1B, EDC3, EDC4 and DDX6. Interacts with DCP2. Interacts with NBDY. Interacts with Tex19.1. Interacts with LSM14A. Interacts with DDX6.

It localises to the cytoplasm. The protein resides in the P-body. It is found in the nucleus. Functionally, in the process of mRNA degradation, seems to play a role in mRNA decapping. Component of a complex containing DCP2 and DCP1A which functions in decapping of ARE-containing mRNAs. Promotes complex formation between DCP1A and DCP2. Enhances the catalytic activity of DCP2 (in vitro). This Rattus norvegicus (Rat) protein is Enhancer of mRNA-decapping protein 4 (Edc4).